Reading from the N-terminus, the 990-residue chain is Aconitate hydratase 3, mitochondrial (990 aa).

The N-terminal 78 residues, 1 to 78 (MYLTASSSAS…PFRFTSQIRA (78 aa)), are a transit peptide targeting the mitochondrion. At Ser-91 the chain carries Phosphoserine. Substrate-binding positions include Gln-182 and 301 to 303 (DSH). [4Fe-4S] cluster is bound by residues Cys-533, Cys-599, and Cys-602. Residues Arg-632, Arg-637, Arg-795, and 876 to 877 (SR) contribute to the substrate site.

This sequence belongs to the aconitase/IPM isomerase family. Monomer. Interacts with B'GAMMA in the cytosol. The cofactor is [4Fe-4S] cluster. In terms of processing, phosphorylated at Ser-91 in the cytoplasm; this phosphorylation requires the presence of B'GAMMA. In terms of tissue distribution, major aconitase isoenzyme in young seedlings. Expressed in roots, leaves, stems and flowers, and, at low levels, in seeds.

The protein resides in the mitochondrion. Its subcellular location is the cytoplasm. It carries out the reaction citrate = D-threo-isocitrate. The protein operates within carbohydrate metabolism; tricarboxylic acid cycle; isocitrate from oxaloacetate: step 2/2. Functionally, catalyzes the isomerization of citrate to isocitrate via cis-aconitate. Contributes to oxidative stress tolerance. Modulates cytosolic citrate metabolism during lipid mobilization. Required during seedling growth. The protein is Aconitate hydratase 3, mitochondrial of Arabidopsis thaliana (Mouse-ear cress).